The following is a 399-amino-acid chain: Beta sliding clamp (399 aa).

It belongs to the beta sliding clamp family. As to quaternary structure, forms a ring-shaped head-to-tail homodimer around DNA which binds and tethers DNA polymerases and other proteins to the DNA. The DNA replisome complex has a single clamp-loading complex (3 tau and 1 each of delta, delta', psi and chi subunits) which binds 3 Pol III cores (1 core on the leading strand and 2 on the lagging strand) each with a beta sliding clamp dimer. Additional proteins in the replisome are other copies of gamma, psi and chi, Ssb, DNA helicase and RNA primase.

It is found in the cytoplasm. Functionally, confers DNA tethering and processivity to DNA polymerases and other proteins. Acts as a clamp, forming a ring around DNA (a reaction catalyzed by the clamp-loading complex) which diffuses in an ATP-independent manner freely and bidirectionally along dsDNA. Initially characterized for its ability to contact the catalytic subunit of DNA polymerase III (Pol III), a complex, multichain enzyme responsible for most of the replicative synthesis in bacteria; Pol III exhibits 3'-5' exonuclease proofreading activity. The beta chain is required for initiation of replication as well as for processivity of DNA replication. The polypeptide is Beta sliding clamp (dnaN) (Mycolicibacterium paratuberculosis (strain ATCC BAA-968 / K-10) (Mycobacterium paratuberculosis)).